The primary structure comprises 245 residues: 1-(5-phosphoribosyl)-5-[(5-phosphoribosylamino)methylideneamino] imidazole-4-carboxamide isomerase (245 aa).

Asp-8 serves as the catalytic Proton acceptor. The Proton donor role is filled by Asp-130.

Belongs to the HisA/HisF family.

It is found in the cytoplasm. The catalysed reaction is 1-(5-phospho-beta-D-ribosyl)-5-[(5-phospho-beta-D-ribosylamino)methylideneamino]imidazole-4-carboxamide = 5-[(5-phospho-1-deoxy-D-ribulos-1-ylimino)methylamino]-1-(5-phospho-beta-D-ribosyl)imidazole-4-carboxamide. It participates in amino-acid biosynthesis; L-histidine biosynthesis; L-histidine from 5-phospho-alpha-D-ribose 1-diphosphate: step 4/9. The protein is 1-(5-phosphoribosyl)-5-[(5-phosphoribosylamino)methylideneamino] imidazole-4-carboxamide isomerase of Pseudomonas fluorescens (strain ATCC BAA-477 / NRRL B-23932 / Pf-5).